The following is a 229-amino-acid chain: 2-C-methyl-D-erythritol 4-phosphate cytidylyltransferase (229 aa).

It belongs to the IspD/TarI cytidylyltransferase family. IspD subfamily.

It catalyses the reaction 2-C-methyl-D-erythritol 4-phosphate + CTP + H(+) = 4-CDP-2-C-methyl-D-erythritol + diphosphate. It functions in the pathway isoprenoid biosynthesis; isopentenyl diphosphate biosynthesis via DXP pathway; isopentenyl diphosphate from 1-deoxy-D-xylulose 5-phosphate: step 2/6. In terms of biological role, catalyzes the formation of 4-diphosphocytidyl-2-C-methyl-D-erythritol from CTP and 2-C-methyl-D-erythritol 4-phosphate (MEP). This chain is 2-C-methyl-D-erythritol 4-phosphate cytidylyltransferase, found in Bacillus pumilus (strain SAFR-032).